We begin with the raw amino-acid sequence, 175 residues long: Large ribosomal subunit protein uL10 (175 aa).

The protein belongs to the universal ribosomal protein uL10 family. In terms of assembly, part of the ribosomal stalk of the 50S ribosomal subunit. The N-terminus interacts with L11 and the large rRNA to form the base of the stalk. The C-terminus forms an elongated spine to which L12 dimers bind in a sequential fashion forming a multimeric L10(L12)X complex.

In terms of biological role, forms part of the ribosomal stalk, playing a central role in the interaction of the ribosome with GTP-bound translation factors. The chain is Large ribosomal subunit protein uL10 from Cupriavidus taiwanensis (strain DSM 17343 / BCRC 17206 / CCUG 44338 / CIP 107171 / LMG 19424 / R1) (Ralstonia taiwanensis (strain LMG 19424)).